A 623-amino-acid chain; its full sequence is MTEYDYEELGLVAGLEIHQQLDTATKLFCDCPTTIREPEESDRSFTRYLHPTKSELGEIDEAALEESMVDREFEYLAYDTTCLVEEDDEPPHRVDREAMETTLEIAQLLDMSVADQVNIMRKIVVDGSNTTGFQRSMLVANDGAIETSAGPVGVEDMLLEEESCQRIEETEDGVRFSLDRLGIPLVEIGTKPDISSPEQAREAAERIGMLLRSTGKVKRGLGTIRQDVNVSIEEGARIELKGVQSLDDIDDLVRNEVRRQVELLDIAEELAERGATVGEPQDVTEVFEDTDSGVIEGALSSGGKVQGLLLSGFDGLVGREIQPDRRLGTELSDHAKRHGAGGIFHTDELPAYGVTEAEVEALRDAVGAGSEDAVAIVADDPETAELAIDAVAERAETALAGVPEETRDANEDATSRYLRPLPGAARMYPETDVPPVEPDVTEVETPELLTEKVDRYESEFDLGSGLAEQVAYGQRWPLFEALVAGEGVDPTLAAGTLESTLTELRRDDVPVENLTDKHLQGAILLVDGGDVPREGMEDLLTALAENPSLTAEEAVEQEGLGGVDESEVRDAVAEVVERHEDQVAEEGMGAFSALMGECMGALRGKADGDTVSDVLRSEIQKRA.

This sequence belongs to the GatB/GatE family. GatE subfamily. As to quaternary structure, heterodimer of GatD and GatE.

The enzyme catalyses L-glutamyl-tRNA(Gln) + L-glutamine + ATP + H2O = L-glutaminyl-tRNA(Gln) + L-glutamate + ADP + phosphate + H(+). Allows the formation of correctly charged Gln-tRNA(Gln) through the transamidation of misacylated Glu-tRNA(Gln) in organisms which lack glutaminyl-tRNA synthetase. The reaction takes place in the presence of glutamine and ATP through an activated gamma-phospho-Glu-tRNA(Gln). The GatDE system is specific for glutamate and does not act on aspartate. This chain is Glutamyl-tRNA(Gln) amidotransferase subunit E, found in Haloarcula marismortui (strain ATCC 43049 / DSM 3752 / JCM 8966 / VKM B-1809) (Halobacterium marismortui).